We begin with the raw amino-acid sequence, 397 residues long: Adenylosuccinate synthetase (397 aa).

GTP-binding positions include 11–17 and 39–41; these read GDEGKGK and GHT. Catalysis depends on Asp12, which acts as the Proton acceptor. 2 residues coordinate Mg(2+): Asp12 and Gly39. IMP is bound by residues 12 to 15, 37 to 40, Thr125, Arg139, Gln212, Thr227, and Arg290; these read DEGK and NAGH. Catalysis depends on His40, which acts as the Proton donor. 286–292 serves as a coordination point for substrate; it reads STTGRPR. GTP-binding positions include Arg292, 318–320, and 386–388; these read KAD and STG.

This sequence belongs to the adenylosuccinate synthetase family. As to quaternary structure, homodimer. Mg(2+) serves as cofactor.

It is found in the cytoplasm. The enzyme catalyses IMP + L-aspartate + GTP = N(6)-(1,2-dicarboxyethyl)-AMP + GDP + phosphate + 2 H(+). The protein operates within purine metabolism; AMP biosynthesis via de novo pathway; AMP from IMP: step 1/2. Plays an important role in the de novo pathway of purine nucleotide biosynthesis. Catalyzes the first committed step in the biosynthesis of AMP from IMP. The sequence is that of Adenylosuccinate synthetase from Thermotoga maritima (strain ATCC 43589 / DSM 3109 / JCM 10099 / NBRC 100826 / MSB8).